The following is a 255-amino-acid chain: MYIEVTGYGPALVLIHGWAMHSGVFAPLVEQLRPHHTLYLVDLPGHGYNHTTPTPLALPQVVHAIAAATPPAVWLGWSLGGLFALHAAATLPQVRGLIMLAATPCFVRREDWPHAVEVSILTQFAQDLKQNYTETINRFLALDTLGSTHAQSELRQLRKILNARHTPNTATLQAGLELLAHTDLRRALIDLTPPSLWIAGQRDRLVPAASIQAATVLAPSDQTELLTITGGGHAPFLSHANQMTAALQHFIATLP.

Substrate-binding positions include Trp18, 78–79, and 139–143; these read SL and FLALD. The Nucleophile role is filled by Ser78. Active-site residues include Asp203 and His233. Residue His233 coordinates substrate.

The protein belongs to the AB hydrolase superfamily. Carboxylesterase BioH family. As to quaternary structure, monomer.

It is found in the cytoplasm. The catalysed reaction is 6-carboxyhexanoyl-[ACP] methyl ester + H2O = 6-carboxyhexanoyl-[ACP] + methanol + H(+). It participates in cofactor biosynthesis; biotin biosynthesis. Functionally, the physiological role of BioH is to remove the methyl group introduced by BioC when the pimeloyl moiety is complete. It allows to synthesize pimeloyl-ACP via the fatty acid synthetic pathway through the hydrolysis of the ester bonds of pimeloyl-ACP esters. This is Pimeloyl-[acyl-carrier protein] methyl ester esterase from Xylella fastidiosa (strain M23).